We begin with the raw amino-acid sequence, 830 residues long: Ribosome biogenesis protein ERB1 (830 aa).

Residues 1-142 (MAPQPLKVGT…NKDLPVDEKL (142 aa)) form a disordered region. Acidic residues-rich tracts occupy residues 35 to 44 (VSEESDEEFG) and 52 to 109 (MSDD…DSDS). Positions 131–142 (EENKDLPVDEKL) are enriched in basic and acidic residues. WD repeat units lie at residues 481-520 (PGDT…EVWR), 523-563 (LHAG…APHI), 660-698 (KTPG…LIRT), 701-740 (SGVK…KPYK), 744-783 (YHNR…DLMQ), and 799-830 (IDGI…LWCS).

This sequence belongs to the WD repeat BOP1/ERB1 family. Component of the NOP7 complex, composed of ERB1, NOP7 and YTM1. The complex is held together by ERB1, which interacts with NOP7 via its N-terminal domain and with YTM1 via a high-affinity interaction between the seven-bladed beta-propeller domains of the 2 proteins. The NOP7 complex associates with the 66S pre-ribosome.

The protein resides in the nucleus. The protein localises to the nucleolus. Its subcellular location is the nucleoplasm. Functionally, component of the NOP7 complex, which is required for maturation of the 25S and 5.8S ribosomal RNAs and formation of the 60S ribosome. The protein is Ribosome biogenesis protein ERB1 of Cryptococcus neoformans var. neoformans serotype D (strain JEC21 / ATCC MYA-565) (Filobasidiella neoformans).